Consider the following 325-residue polypeptide: Melanocortin receptor 5 (325 aa).

Over 1–37 (MNSSSHLTLLDLTLNASEDNILGQNVNNKSSACEDMG) the chain is Extracellular. N-linked (GlcNAc...) asparagine glycans are attached at residues Asn-2, Asn-15, and Asn-28. Residues 38-61 (IAVEVFLTLGLVSLLENILVIGAI) traverse the membrane as a helical segment. At 62–73 (VKNKNLHSPMYF) the chain is on the cytoplasmic side. The helical transmembrane segment at 74–97 (FVGSLAVADMLVSMSNAWETITIY) threads the bilayer. Topologically, residues 98–114 (LINNKHVVIADTFVRHI) are extracellular. A helical transmembrane segment spans residues 115 to 138 (DNVFDSMICISVVASMCSLLAIAV). Residues 139–155 (DRYITIFYALRYHHIMT) lie on the Cytoplasmic side of the membrane. Residues 156–179 (ARRSGVIIACIWTFCISCGIVFII) traverse the membrane as a helical segment. The Extracellular segment spans residues 180–186 (YYESKYV). The chain crosses the membrane as a helical span at residues 187 to 211 (IVCLISMFFTMLFFMVSLYIHMFLL). Residues 212 to 239 (ARNHVKRIAASPRYNSVRQRASMKGAIT) are Cytoplasmic-facing. Residues 240–265 (LTMLLGIFIVCWSPFFLHLILMISCP) form a helical membrane-spanning segment. At 266–273 (QNVYCACF) the chain is on the extracellular side. A helical transmembrane segment spans residues 274-297 (MSYFNMYLILIMCNSVIDPLIYAL). Over 298–325 (RSQEMRRTFKEIICCHGFRRTCTLLGRY) the chain is Cytoplasmic. S-palmitoyl cysteine attachment occurs at residues Cys-311 and Cys-312.

The protein belongs to the G-protein coupled receptor 1 family. As to expression, very low expression levels is detected in brain, while high levels are found in adrenals, stomach, lung and spleen.

Its subcellular location is the cell membrane. Its function is as follows. Receptor for MSH (alpha, beta and gamma) and ACTH. The activity of this receptor is mediated by G proteins which activate adenylate cyclase. This receptor is a possible mediator of the immunomodulation properties of melanocortins. This is Melanocortin receptor 5 (Mc5r) from Rattus norvegicus (Rat).